The primary structure comprises 542 residues: CTP synthase (542 aa).

An amidoligase domain region spans residues 1–265; that stretch reads MTRYIFVTGG…DDFVVERFGL (265 aa). Ser-13 provides a ligand contact to CTP. Ser-13 is a binding site for UTP. Residues 14–19 and Asp-71 contribute to the ATP site; that span reads SLGKGI. Asp-71 and Glu-139 together coordinate Mg(2+). Residues 146–148, 186–191, and Lys-222 each bind CTP; these read DIE and KTKPTQ. Residues 186 to 191 and Lys-222 each bind UTP; that span reads KTKPTQ. The 252-residue stretch at 290–541 folds into the Glutamine amidotransferase type-1 domain; sequence TIAMVGKYME…VKAALAQKNK (252 aa). Gly-351 provides a ligand contact to L-glutamine. Residue Cys-378 is the Nucleophile; for glutamine hydrolysis of the active site. Residues 379 to 382, Glu-402, and Arg-469 each bind L-glutamine; that span reads LGMQ. Active-site residues include His-514 and Glu-516.

The protein belongs to the CTP synthase family. In terms of assembly, homotetramer.

The catalysed reaction is UTP + L-glutamine + ATP + H2O = CTP + L-glutamate + ADP + phosphate + 2 H(+). The enzyme catalyses L-glutamine + H2O = L-glutamate + NH4(+). It catalyses the reaction UTP + NH4(+) + ATP = CTP + ADP + phosphate + 2 H(+). It participates in pyrimidine metabolism; CTP biosynthesis via de novo pathway; CTP from UDP: step 2/2. Its activity is regulated as follows. Allosterically activated by GTP, when glutamine is the substrate; GTP has no effect on the reaction when ammonia is the substrate. The allosteric effector GTP functions by stabilizing the protein conformation that binds the tetrahedral intermediate(s) formed during glutamine hydrolysis. Inhibited by the product CTP, via allosteric rather than competitive inhibition. In terms of biological role, catalyzes the ATP-dependent amination of UTP to CTP with either L-glutamine or ammonia as the source of nitrogen. Regulates intracellular CTP levels through interactions with the four ribonucleotide triphosphates. This is CTP synthase from Pseudomonas putida (strain ATCC 700007 / DSM 6899 / JCM 31910 / BCRC 17059 / LMG 24140 / F1).